A 471-amino-acid chain; its full sequence is Glutamate--tRNA ligase (471 aa).

The 'HIGH' region motif lies at 9–19 (PSPTGYLHVGG). Cys98, Cys100, Cys125, and Asp127 together coordinate Zn(2+). The short motif at 237-241 (KLSKR) is the 'KMSKS' region element. Lys240 provides a ligand contact to ATP.

Belongs to the class-I aminoacyl-tRNA synthetase family. Glutamate--tRNA ligase type 1 subfamily. As to quaternary structure, monomer. Zn(2+) serves as cofactor.

The protein localises to the cytoplasm. The enzyme catalyses tRNA(Glu) + L-glutamate + ATP = L-glutamyl-tRNA(Glu) + AMP + diphosphate. In terms of biological role, catalyzes the attachment of glutamate to tRNA(Glu) in a two-step reaction: glutamate is first activated by ATP to form Glu-AMP and then transferred to the acceptor end of tRNA(Glu). This chain is Glutamate--tRNA ligase, found in Yersinia pseudotuberculosis serotype IB (strain PB1/+).